The following is a 483-amino-acid chain: UDP-N-acetylmuramate--L-alanine ligase (483 aa).

Residue 122–128 (GSHGKTT) participates in ATP binding.

Belongs to the MurCDEF family.

The protein resides in the cytoplasm. The catalysed reaction is UDP-N-acetyl-alpha-D-muramate + L-alanine + ATP = UDP-N-acetyl-alpha-D-muramoyl-L-alanine + ADP + phosphate + H(+). It participates in cell wall biogenesis; peptidoglycan biosynthesis. In terms of biological role, cell wall formation. This Synechococcus sp. (strain CC9311) protein is UDP-N-acetylmuramate--L-alanine ligase.